The sequence spans 347 residues: 4-hydroxythreonine-4-phosphate dehydrogenase (347 aa).

Substrate is bound by residues H137 and T138. A divalent metal cation-binding residues include H174, H219, and H274. Substrate is bound by residues K282, N291, and R300.

It belongs to the PdxA family. As to quaternary structure, homodimer. It depends on Zn(2+) as a cofactor. Requires Mg(2+) as cofactor. Co(2+) serves as cofactor.

Its subcellular location is the cytoplasm. The catalysed reaction is 4-(phosphooxy)-L-threonine + NAD(+) = 3-amino-2-oxopropyl phosphate + CO2 + NADH. The protein operates within cofactor biosynthesis; pyridoxine 5'-phosphate biosynthesis; pyridoxine 5'-phosphate from D-erythrose 4-phosphate: step 4/5. Functionally, catalyzes the NAD(P)-dependent oxidation of 4-(phosphooxy)-L-threonine (HTP) into 2-amino-3-oxo-4-(phosphooxy)butyric acid which spontaneously decarboxylates to form 3-amino-2-oxopropyl phosphate (AHAP). The sequence is that of 4-hydroxythreonine-4-phosphate dehydrogenase from Cupriavidus pinatubonensis (strain JMP 134 / LMG 1197) (Cupriavidus necator (strain JMP 134)).